We begin with the raw amino-acid sequence, 298 residues long: Probable endonuclease 4 (298 aa).

Residues His-69, His-111, Glu-146, Asp-180, His-183, His-215, Asp-228, His-230, and Glu-260 each contribute to the Zn(2+) site.

This sequence belongs to the AP endonuclease 2 family. Zn(2+) serves as cofactor.

The catalysed reaction is Endonucleolytic cleavage to 5'-phosphooligonucleotide end-products.. Endonuclease IV plays a role in DNA repair. It cleaves phosphodiester bonds at apurinic or apyrimidinic (AP) sites, generating a 3'-hydroxyl group and a 5'-terminal sugar phosphate. The protein is Probable endonuclease 4 of Bacillus mycoides (strain KBAB4) (Bacillus weihenstephanensis).